The following is a 434-amino-acid chain: Zinc finger and BTB domain-containing protein 8A (434 aa).

The region spanning 24–92 (CDCSILVEGK…VYSGKLSLTG (69 aa)) is the BTB domain. The segment at 134–238 (SLSDKDTGSN…SGNHVSQSEE (105 aa)) is disordered. Residues S161 and S167 each carry the phosphoserine modification. Residues K172, K176, and K193 each participate in a glycyl lysine isopeptide (Lys-Gly) (interchain with G-Cter in SUMO2) cross-link. Over residues 192-202 (AKHEQRKEPSK) the composition is skewed to basic and acidic residues. The span at 226-238 (QTDSGNHVSQSEE) shows a compositional bias: polar residues. 2 C2H2-type zinc fingers span residues 275–297 (FKCPFCTHVVKRKADLKRHLRCH) and 303–326 (YPCQACGKRFSRLDHLSSHFRTIH). K430 is covalently cross-linked (Glycyl lysine isopeptide (Lys-Gly) (interchain with G-Cter in SUMO2)).

The protein localises to the nucleus. May be involved in transcriptional regulation. The polypeptide is Zinc finger and BTB domain-containing protein 8A (Zbtb8a) (Mus musculus (Mouse)).